The chain runs to 262 residues: Conserved oligomeric Golgi complex subunit 2 (262 aa).

Component of the conserved oligomeric Golgi (COG or Sec34/Sec35) complex which consists of eight different proteins COG1-COG8. The COG complex interacts with the Rab GTPase YPT1, the Glogi SNAREs GOS1, SEC22, SED5, VTI1 and YKT6 and the COPI coatomer subunit gamma SEC21.

Its subcellular location is the golgi apparatus membrane. Functionally, acts as a component of the peripheral membrane COG complex that is involved in intra-Golgi protein trafficking. COG is located at the cis-Golgi, and regulates tethering of retrograde intra-Golgi vesicles and possibly a number of other membrane trafficking events. COG2 is required for ER to Golgi vesicle docking. Not essential for viability. This Saccharomyces cerevisiae (strain ATCC 204508 / S288c) (Baker's yeast) protein is Conserved oligomeric Golgi complex subunit 2 (COG2).